Consider the following 274-residue polypeptide: Large ribosomal subunit protein uL2 (274 aa).

2 disordered regions span residues 37–60 and 224–252; these read QHQKSGRNNNGHITTRHKGGGHKH and AMNPIDHPHGGGEGRTGEGRHAVDPWGNL. Residues 50–60 show a composition bias toward basic residues; it reads TTRHKGGGHKH. Over residues 229 to 246 the composition is skewed to basic and acidic residues; sequence DHPHGGGEGRTGEGRHAV.

This sequence belongs to the universal ribosomal protein uL2 family. As to quaternary structure, part of the 50S ribosomal subunit. Forms a bridge to the 30S subunit in the 70S ribosome.

Functionally, one of the primary rRNA binding proteins. Required for association of the 30S and 50S subunits to form the 70S ribosome, for tRNA binding and peptide bond formation. It has been suggested to have peptidyltransferase activity; this is somewhat controversial. Makes several contacts with the 16S rRNA in the 70S ribosome. The protein is Large ribosomal subunit protein uL2 of Paracidovorax citrulli (strain AAC00-1) (Acidovorax citrulli).